The chain runs to 255 residues: Borealin-2 (255 aa).

Disordered stretches follow at residues 1–24 (MAPRRTRKVSQDSDGQADDQHSFE) and 107–156 (IQKP…STGS). Residues 124–135 (AGQQRSSSQSKT) show a composition bias toward polar residues.

Belongs to the borealin family. Component of the CPC complex.

It localises to the nucleus. Its subcellular location is the chromosome. It is found in the centromere. Component of the chromosomal passenger complex (CPC), a complex that acts as a key regulator of mitosis. The CPC complex has essential functions at the centromere in ensuring correct chromosome alignment and segregation and is required for chromatin-induced microtubule stabilization and spindle assembly. The polypeptide is Borealin-2 (cdca9) (Danio rerio (Zebrafish)).